A 66-amino-acid polypeptide reads, in one-letter code: Toxin Boma6e (66 aa).

An LCN-type CS-alpha/beta domain is found at 2–64; sequence RDAYIAQNYN…VPLKVQGKCH (63 aa). 3 disulfide bridges follow: C12–C63, C22–C46, and C26–C48.

It belongs to the long (3 C-C) scorpion toxin superfamily. Only three disulfide bridges can be formed, because only seven cysteines are present. In terms of tissue distribution, expressed by the venom gland.

It is found in the secreted. In terms of biological role, binds voltage-independently at site-3 of sodium channels (Nav) and inhibits the inactivation of the activated channels, thereby blocking neuronal transmission. The sequence is that of Toxin Boma6e from Buthus occitanus mardochei (Moroccan scorpion).